Reading from the N-terminus, the 185-residue chain is MKTAQELRVGNVVQIGSDAWVIAKAEYNKSGRNSAVVKMKMKNLLTNAGQEAVYKADDKFDVVVLDRKEVTYSYFADPMYVFMDADYNQFEVEAEMMGEALNYLEDGMACEVVFYNEKAISVELPTVLVREITYTEPAVKGDTSSGKVLKNAKLATGFELQVPLFCNTGDKIEIDTRTNEYRSRA.

Belongs to the elongation factor P family.

The protein localises to the cytoplasm. It participates in protein biosynthesis; polypeptide chain elongation. In terms of biological role, involved in peptide bond synthesis. Stimulates efficient translation and peptide-bond synthesis on native or reconstituted 70S ribosomes in vitro. Probably functions indirectly by altering the affinity of the ribosome for aminoacyl-tRNA, thus increasing their reactivity as acceptors for peptidyl transferase. The chain is Elongation factor P from Burkholderia lata (strain ATCC 17760 / DSM 23089 / LMG 22485 / NCIMB 9086 / R18194 / 383).